Consider the following 126-residue polypeptide: Small ribosomal subunit protein uS13 (126 aa).

The tract at residues Pro-96–Lys-126 is disordered. The span at Gln-100–Lys-126 shows a compositional bias: basic residues.

This sequence belongs to the universal ribosomal protein uS13 family. As to quaternary structure, part of the 30S ribosomal subunit. Forms a loose heterodimer with protein S19. Forms two bridges to the 50S subunit in the 70S ribosome.

In terms of biological role, located at the top of the head of the 30S subunit, it contacts several helices of the 16S rRNA. In the 70S ribosome it contacts the 23S rRNA (bridge B1a) and protein L5 of the 50S subunit (bridge B1b), connecting the 2 subunits; these bridges are implicated in subunit movement. Contacts the tRNAs in the A and P-sites. In Thermosynechococcus vestitus (strain NIES-2133 / IAM M-273 / BP-1), this protein is Small ribosomal subunit protein uS13.